Here is a 167-residue protein sequence, read N- to C-terminus: RNA pyrophosphohydrolase (167 aa).

Positions 8–158 (PYRTCVGMML…KRPVYERVVK (151 aa)) constitute a Nudix hydrolase domain. Residues 47-68 (GGVDPGEDTWEAAKRELYEETN) carry the Nudix box motif.

This sequence belongs to the Nudix hydrolase family. RppH subfamily. The cofactor is a divalent metal cation.

Accelerates the degradation of transcripts by removing pyrophosphate from the 5'-end of triphosphorylated RNA, leading to a more labile monophosphorylated state that can stimulate subsequent ribonuclease cleavage. This Rhodopseudomonas palustris (strain HaA2) protein is RNA pyrophosphohydrolase.